The primary structure comprises 418 residues: Probable aminotransferase Rv1178 (418 aa).

The disordered stretch occupies residues 22–42 (GQGWHDRERPASGQGSGAAER).

This sequence belongs to the class-I pyridoxal-phosphate-dependent aminotransferase family. Pyridoxal 5'-phosphate is required as a cofactor.

The sequence is that of Probable aminotransferase Rv1178 from Mycobacterium tuberculosis (strain ATCC 25618 / H37Rv).